The chain runs to 360 residues: G-protein coupled receptor 15 (360 aa).

Residues 1–33 (MDPEETSVYLDYYYATSPNPDIRETHSHVPYTS) lie on the Extracellular side of the membrane. Residues 34 to 54 (VFLPVFYIAVFLTGVLGNLVL) traverse the membrane as a helical segment. Over 55 to 69 (MGALHFKPGSRRLID) the chain is Cytoplasmic. A helical transmembrane segment spans residues 70 to 90 (IFIINLAASDFIFLVTLPLWV). Residues 91-120 (DKEASLGLWRTGSFLCKGSSYMISVNMHCS) are Extracellular-facing. The chain crosses the membrane as a helical span at residues 121–141 (VFLLTCMSVDRYLAIVCPVVS). At 142–149 (RKFRRTDC) the chain is on the cytoplasmic side. The helical transmembrane segment at 150-170 (AYVVCASIWFISCLLGLPTLL) threads the bilayer. Residues 171-192 (SRELTLIDDKPYCAEKKATPLK) lie on the Extracellular side of the membrane. Residues 193-213 (LIWSLVALIFTFFVPLLSIVT) traverse the membrane as a helical segment. At 214–239 (CYCRIARKLCAHYQQSGKHNKKLKKS) the chain is on the cytoplasmic side. The helical transmembrane segment at 240 to 260 (IKIIFIVVAAFLVSWLPFNTS) threads the bilayer. Residues 261–284 (KLLAIVSGLQQERYFPSAILQLGM) are Extracellular-facing. Residues 285 to 305 (EVSGPLAFANSCVNPFIYYIF) form a helical membrane-spanning segment. The Cytoplasmic portion of the chain corresponds to 306 to 360 (DSYIRRAIVHCLCPCLKNYDFGSSTETSDSHLTKALSTFIHAEDFTRRRKRSVSL). Ser359 carries the post-translational modification Phosphoserine.

This sequence belongs to the G-protein coupled receptor 1 family. As to quaternary structure, interacts with adapter YWHAE; this interaction promotes ER-to-Golgi transport of GPR15. Post-translationally, phosphorylation is necessary for YWHAE binding and efficient surface expression. In terms of processing, O-glycosylated. Sialylated O-glycans in the N-terminal tail inhibits binding of GPR15LG. Sulfation is required for efficient binding of GPR15LG.

Its subcellular location is the cell membrane. Functionally, g protein-coupled receptor that plays an important role in immune homeostasis. Acts via its natural ligand GPR15LG, a chemokine-like polypeptide strongly expressed in gastrointestinal tissues. GPR15-GPR15LG signaling axis regulates intestinal homeostasis and inflammation through the migration of immune cells. Controls thereby the specific homing of T-cells, particularly FOXP3+ regulatory T-cells (Tregs), to the large intestine lamina propria. Also required for skin localization of thymus-derived dendritic epidermal T-cells. Plays an important role in mediating cytoprotective function as well as angiogenesis of thrombomodulin. Mechanistically, preferentially signals through the Gi/o pathway to inhibit adenylate cyclase activity and activate a phosphatidylinositol-calcium second messenger system that regulates the release of Ca(2+) ions from intracellular stores. In Chlorocebus aethiops (Green monkey), this protein is G-protein coupled receptor 15 (GPR15).